Consider the following 210-residue polypeptide: Vacuolar protein sorting-associated protein 2 homolog 3 (210 aa).

The disordered stretch occupies residues 1–23 (MNIFTKKPNPREVLRESKREMTQ). The segment covering 9–23 (NPREVLRESKREMTQ) has biased composition (basic and acidic residues). Residues 28–84 (IEKEIGSLQSEEKKLVLEIKRTAKSGNEGATKILARQLIRLRQQIANLQGSRAQMRG) adopt a coiled-coil conformation. Residues 178–200 (LSSAPKGKIGGKKAEDVGSSGID) are disordered.

It belongs to the SNF7 family. In terms of assembly, component of the endosomal sorting required for transport complex III (ESCRT-III), composed at least of VPS2, VPS20, VPS24 and VPS32.

Its subcellular location is the endosome. Component of the ESCRT-III complex, which is required for multivesicular bodies (MVBs) formation and sorting of endosomal cargo proteins into MVBs. The ESCRT-III complex is probably involved in the concentration of MVB cargo. In Arabidopsis thaliana (Mouse-ear cress), this protein is Vacuolar protein sorting-associated protein 2 homolog 3 (VPS2.3).